Consider the following 333-residue polypeptide: Ketol-acid reductoisomerase (NADP(+)) (333 aa).

The KARI N-terminal Rossmann domain maps to 2 to 182 (AELFYDDDAD…GGTRAGVIKT (181 aa)). Residues 25–28 (YGSQ), S51, S53, and 83–86 (DPIQ) contribute to the NADP(+) site. H108 is an active-site residue. G134 contributes to the NADP(+) binding site. One can recognise a KARI C-terminal knotted domain in the interval 183–328 (TFTEETETDL…RELRKLMSWV (146 aa)). 4 residues coordinate Mg(2+): D191, E195, E227, and E231. S252 is a substrate binding site.

It belongs to the ketol-acid reductoisomerase family. It depends on Mg(2+) as a cofactor.

It carries out the reaction (2R)-2,3-dihydroxy-3-methylbutanoate + NADP(+) = (2S)-2-acetolactate + NADPH + H(+). It catalyses the reaction (2R,3R)-2,3-dihydroxy-3-methylpentanoate + NADP(+) = (S)-2-ethyl-2-hydroxy-3-oxobutanoate + NADPH + H(+). It functions in the pathway amino-acid biosynthesis; L-isoleucine biosynthesis; L-isoleucine from 2-oxobutanoate: step 2/4. Its pathway is amino-acid biosynthesis; L-valine biosynthesis; L-valine from pyruvate: step 2/4. Involved in the biosynthesis of branched-chain amino acids (BCAA). Catalyzes an alkyl-migration followed by a ketol-acid reduction of (S)-2-acetolactate (S2AL) to yield (R)-2,3-dihydroxy-isovalerate. In the isomerase reaction, S2AL is rearranged via a Mg-dependent methyl migration to produce 3-hydroxy-3-methyl-2-ketobutyrate (HMKB). In the reductase reaction, this 2-ketoacid undergoes a metal-dependent reduction by NADPH to yield (R)-2,3-dihydroxy-isovalerate. This chain is Ketol-acid reductoisomerase (NADP(+)), found in Streptomyces griseus subsp. griseus (strain JCM 4626 / CBS 651.72 / NBRC 13350 / KCC S-0626 / ISP 5235).